A 303-amino-acid polypeptide reads, in one-letter code: Recombination-associated protein RdgC (303 aa).

This sequence belongs to the RdgC family.

The protein resides in the cytoplasm. Its subcellular location is the nucleoid. In terms of biological role, may be involved in recombination. The polypeptide is Recombination-associated protein RdgC (Shewanella piezotolerans (strain WP3 / JCM 13877)).